Here is a 340-residue protein sequence, read N- to C-terminus: MICLLRTARLSARLLFASAAAPCRRASRFNVPPSAEFVARPVGVCSMLRLPVQTSAEGLDAAFVGVPLDTGTSNRPGARFGPQQIRAESVMVRRYNASTGAAPFDSLLVADVGDVNVNLYNLPDSCRRIRESYQKIVASGCVPLTLGGDHSITYPILQAVAEKHGPVGLVHVDAHTDTSDMALGEKIYHGTPFRRCVDEGLLDCSRVVQIGIRGSSYAPNPYKYCWDQGFRVVPAEECWMKSLVPLMGEVRQQMGDGPVYISFDIDGLDPAYAPGTGTPEIAGLTPMQALEIIRGCKGLNIVGCDLVEVAPIYDVSGNTALLGANLLFEMLCVLPGVKTM.

The Mn(2+) site is built by His150, Asp173, His175, Asp177, Asp264, and Asp266.

Belongs to the arginase family. Agmatinase subfamily. The cofactor is Mn(2+).

It localises to the mitochondrion. The enzyme catalyses agmatine + H2O = urea + putrescine. Its pathway is amine and polyamine biosynthesis; putrescine biosynthesis via agmatine pathway; putrescine from agmatine: step 1/1. This chain is Agmatinase, mitochondrial (AGMAT), found in Gallus gallus (Chicken).